Consider the following 129-residue polypeptide: Small ribosomal subunit protein uS11 (129 aa).

The protein belongs to the universal ribosomal protein uS11 family. In terms of assembly, part of the 30S ribosomal subunit. Interacts with proteins S7 and S18. Binds to IF-3.

In terms of biological role, located on the platform of the 30S subunit, it bridges several disparate RNA helices of the 16S rRNA. Forms part of the Shine-Dalgarno cleft in the 70S ribosome. The polypeptide is Small ribosomal subunit protein uS11 (Staphylococcus saprophyticus subsp. saprophyticus (strain ATCC 15305 / DSM 20229 / NCIMB 8711 / NCTC 7292 / S-41)).